We begin with the raw amino-acid sequence, 294 residues long: Secreted frizzled-related protein 2 (294 aa).

Positions 1–24 (MPRGPGSLLLLVLASHCCLGSARG) are cleaved as a signal peptide. The FZ domain maps to 34–154 (YKRSNCKPIP…PQDNDLCIPL (121 aa)). Cystine bridges form between C39/C102, C49/C95, C86/C124, C113/C151, C117/C141, C171/C244, C174/C246, and C189/C294. The NTR domain occupies 171-294 (CEACKNKNED…ISRSIRKLQC (124 aa)).

Belongs to the secreted frizzled-related protein (sFRP) family.

It is found in the secreted. Soluble frizzled-related proteins (sFRPS) function as modulators of Wnt signaling through direct interaction with Wnts. They have a role in regulating cell growth and differentiation in specific cell types. SFRP2 may be important for eye retinal development and for myogenesis. This chain is Secreted frizzled-related protein 2 (SFRP2), found in Canis lupus familiaris (Dog).